A 201-amino-acid polypeptide reads, in one-letter code: Guanylate kinase (201 aa).

In terms of domain architecture, Guanylate kinase-like spans 2 to 180 (SCLFVISAPS…AARDVASIVQ (179 aa)). 9-16 (APSGAGKT) serves as a coordination point for ATP.

Belongs to the guanylate kinase family.

The protein localises to the cytoplasm. It catalyses the reaction GMP + ATP = GDP + ADP. Essential for recycling GMP and indirectly, cGMP. In Nitrosomonas europaea (strain ATCC 19718 / CIP 103999 / KCTC 2705 / NBRC 14298), this protein is Guanylate kinase.